Reading from the N-terminus, the 260-residue chain is tRNA pseudouridine synthase A (260 aa).

Asp52 acts as the Nucleophile in catalysis. Tyr111 contributes to the substrate binding site.

This sequence belongs to the tRNA pseudouridine synthase TruA family. As to quaternary structure, homodimer.

The catalysed reaction is uridine(38/39/40) in tRNA = pseudouridine(38/39/40) in tRNA. Formation of pseudouridine at positions 38, 39 and 40 in the anticodon stem and loop of transfer RNAs. This Roseobacter denitrificans (strain ATCC 33942 / OCh 114) (Erythrobacter sp. (strain OCh 114)) protein is tRNA pseudouridine synthase A.